Reading from the N-terminus, the 345-residue chain is Serine/threonine-protein kinase US3 homolog (345 aa).

The Protein kinase domain maps to 49-334 (FSVLETFTPG…KALLDFAAFY (286 aa)). ATP contacts are provided by residues 55 to 63 (FTPGAEGFT) and Lys78. Asp162 serves as the catalytic Proton acceptor.

This sequence belongs to the protein kinase superfamily. Ser/Thr protein kinase family. In terms of processing, phosphorylated by UL13 homolog; this phosphorylation regulates subsequent phosphorylation of UL31 and UL34 homologs by US3. Autophosphorylated.

Its subcellular location is the host cytoplasm. It is found in the host nucleus. The catalysed reaction is L-seryl-[protein] + ATP = O-phospho-L-seryl-[protein] + ADP + H(+). The enzyme catalyses L-threonyl-[protein] + ATP = O-phospho-L-threonyl-[protein] + ADP + H(+). Functionally, multifunctional serine/threonine kinase that plays a role in several processes including egress of virus particles from the nucleus, modulation of the actin cytoskeleton and inhibition of apoptosis. Phosphorylates UL31 and UL34 homologs, two critical regulators of capsid budding from nucleus to endoplasmic reticulum, thereby facilitating virion egress. Modulates and redistributes host components of the nuclear envelope, including LMNA, emerin/EMD and the nuclear matrix protein MATR3. Phosphorylates envelope glycoprotein B (gB), probably to direct it to the cell surface. Promotes virus intracellular spread by restructuring host cell cytoskeleton. Blocks host apoptosis to extend cell survival and allow efficient viral replication. Promotes viral gene expression by phosphorylating host HDAC2 to reduce viral genome silencing. The sequence is that of Serine/threonine-protein kinase US3 homolog (US2) from Chlorocebus aethiops (Green monkey).